Reading from the N-terminus, the 103-residue chain is Large ribosomal subunit protein bL21 (103 aa).

The protein belongs to the bacterial ribosomal protein bL21 family. Part of the 50S ribosomal subunit. Contacts protein L20.

In terms of biological role, this protein binds to 23S rRNA in the presence of protein L20. The sequence is that of Large ribosomal subunit protein bL21 from Shewanella sp. (strain MR-7).